The following is an 853-amino-acid chain: MSLNDNTNLSSHTPMMQQYLRLKAEHPEILLFYRMGDFYELFYDDAKRASQLLEISLTKRGSSAGEPIPMAGVPYHAVENYLAKLVHLGESVAICEQIGDPALSKGPVERKVVRIVTPGTISDEALLNERQDNLLAAIWQSTRGFGYATLDISSGRFRLAEPTDRETMAAELQRTNPAELLYPEDFAAMDLIENRRGLRRRALWEYELDTARQQLNLQFATRDLSGFGVEQAHHALRAAGCLLQYVKDTQRTSLPHIRSLTIERQQDGIIMDAATRRNLEITQNLAGGSDNTLASVLDKTVTPMGSRMLKRWLHMPLRNAQTIALRQQSIRTLQDLNDSLPPLLRQVGDLERILARLALRTARPRDLARMRHAFQQLPQLNNELADSDNAHLQTLRSQMGEFTELRELLEHAIVETPPVLVRDGGVIAPGYNQELDEWRALADGATDYLDRLEIREREKLGLDTLKVGFNGVHGYYIQVSRGQSHLVPIHYVRRQTLKNAERYIIPELKEYEDKVLTSKGKALSLEKALYEQLFDRLLPHLAALQDSAAALAELDVLTNLAERAWTLNYSCPTLSDKPGIKLTGGRHPVVEQVLKDPFIANPLSLSPQRRMLVVTGPNMGGKSTYMRQAALITLMAHIGSFVPAEQAIIGPIDRIFTRVGAADDLASGRSTFMVEMTETANILHNATEYSLVLMDEIGRGTSTYDGLSLAWACAESLANRIKAMTLFATHYFELTTLPEQIEGVANVHLDAVEHGDTIAFMHSVQEGAASKSYGLAVAALAGVPKDVIKRARQKLKELEALSGSAASTRADGSQLPLLVEETSPAVEALEALDPDSLSPRQALEWIYRLKSLV.

An ATP-binding site is contributed by 616–623 (GPNMGGKS).

This sequence belongs to the DNA mismatch repair MutS family.

This protein is involved in the repair of mismatches in DNA. It is possible that it carries out the mismatch recognition step. This protein has a weak ATPase activity. This chain is DNA mismatch repair protein MutS, found in Erwinia tasmaniensis (strain DSM 17950 / CFBP 7177 / CIP 109463 / NCPPB 4357 / Et1/99).